The chain runs to 615 residues: MQQNQVKKGTKEMEFFTEYGDANRYRILEVIGKGSYGVVCAAIDTHTGEKVAIKKINDVFEHISDALRILREVKLLRLLRHPDIVEIKSIMLPPSKREFKDIYVVFELMESDLHQVIKANDDLTREHHQFFLYQMLRALKFMHTANVYHRDLKPKNILANANCKLKVCDFGLARVAFNDTPTTVFWTDYVATRWYRAPELCGSFFSKYTPAIDVWSIGCIFAEVLTGKPLFPGKSVVHQLELITDLLGTPKSETISGVRNDKARKYLTEMRKKNPVTFSQKFSKADPLALRLLQRLLAFDPKDRPTPAEALADPYFKGLSKIEREPSSQQISKMEFEFERRRLTKDDIRELIYREILEYHPQLLKDYMSGSEGSNFVYPSAIGHLRQQFTYLEENSSRNGPVIPLERKHASLPRSTVHSTVVHSTSQPNLGATDSRRVSFEPSKNGASSAGHPSTSAYPTKSIGPPPRVPPSGRPGRVVESSVSYENGRNLKEAYFRSAVSSPHCYFRPNTMTNPENRNIEASSFPPKPQNPVHQFSPTEPPAATTNQADVETMNHPNPYFQPQLPKTDQLNNNTHMAIDAKLLQAQSQFGPAGAAAVAVAAHRNIGTISYSAAS.

Positions 25-316 (YRILEVIGKG…PAEALADPYF (292 aa)) constitute a Protein kinase domain. ATP contacts are provided by residues 31 to 39 (IGKGSYGVV) and K54. D151 acts as the Proton acceptor in catalysis. A Phosphothreonine modification is found at T187. Positions 187–189 (TDY) match the TXY motif. At Y189 the chain carries Phosphotyrosine. T192 bears the Phosphothreonine mark. Disordered stretches follow at residues 414-483 (RSTV…ESSV) and 510-544 (NTMT…PPAA). The segment covering 415 to 426 (STVHSTVVHSTS) has biased composition (low complexity). Residues 445–459 (NGASSAGHPSTSAYP) show a composition bias toward polar residues. The segment covering 464-473 (GPPPRVPPSG) has biased composition (pro residues). Polar residues-rich tracts occupy residues 510–522 (NTMT…NIEA) and 532–544 (PVHQ…PPAA).

It belongs to the protein kinase superfamily. CMGC Ser/Thr protein kinase family. MAP kinase subfamily. In terms of assembly, interacts with PHS1. Binds to MAPKKK20. In terms of processing, dually phosphorylated on Thr-187 and Tyr-189, which activates the enzyme. Phosphorylated by MAPKKK20. In terms of tissue distribution, expressed in roots, seedlings, leaves, flower buds, flowers and siliques.

The protein localises to the nucleus. It is found in the cytoplasm. It catalyses the reaction L-seryl-[protein] + ATP = O-phospho-L-seryl-[protein] + ADP + H(+). The catalysed reaction is L-threonyl-[protein] + ATP = O-phospho-L-threonyl-[protein] + ADP + H(+). Activated by threonine and tyrosine phosphorylation. Inactivated by phosphatase PHS1. Functionally, mitogen-activated protein kinase (MAPK) that is specifically regulated by PHS1 and MAPKKK20 and mediates signaling that regulates cortical microtubule functions, maybe through regulation of microtubule dynamic instability. This is Mitogen-activated protein kinase 18 from Arabidopsis thaliana (Mouse-ear cress).